The sequence spans 321 residues: uncharacterized protein (321 aa).

The Exonuclease domain occupies 130-314 (NLVYDLETTG…NDVDALIKIM (185 aa)).

This is an uncharacterized protein from Acanthamoeba polyphaga (Amoeba).